The chain runs to 133 residues: MIKRAAAAAIGGALAVAAVPAVLGAVGFTGAGIAASSLAAKMMSAAAVANGGGVAAGSLVATLQSVGAAGLSTSSNILLGSIGSAFGALLGGAKRASPSPPPGGPRPEGEQPGENVPQVEPPKSPLGPEKHEK.

The next 3 helical transmembrane spans lie at 8-28 (AAIG…AVGF), 51-71 (GGGV…AAGL), and 73-93 (TSSN…LGGA). A disordered region spans residues 93 to 133 (AKRASPSPPPGGPRPEGEQPGENVPQVEPPKSPLGPEKHEK).

The protein belongs to the IFI6/IFI27 family.

The protein resides in the mitochondrion membrane. Its function is as follows. Plays a role in the apoptotic process and has a pro-apoptotic activity. In Bos taurus (Bovine), this protein is Interferon alpha-inducible protein 27-like protein 2.